The chain runs to 373 residues: SAM domain-containing protein SAMSN-1 (373 aa).

Positions 1 to 72 are disordered; it reads MLKRKPSNVS…GGGLGKKMRA (72 aa). Positions 20–25 match the Important for interaction with 14-3-3 proteins motif; that stretch reads RSSSFG. A phosphoserine mark is found at S23 and S34. The span at 37-48 shows a compositional bias: basic and acidic residues; that stretch reads KPDDSTEAHEGD. A compositionally biased stretch (polar residues) spans 50-61; sequence TNGSGEQSKTSN. Residue S74 is modified to Phosphoserine. T76 bears the Phosphothreonine mark. Phosphoserine occurs at positions 90 and 119. The interval 91–153 is disordered; sequence EEKDEEDGEN…DGTSNRDSFR (63 aa). A compositionally biased stretch (low complexity) spans 123 to 146; the sequence is SDSMDSLYSGQSSSSGITSCSDGT. Y160 carries the phosphotyrosine modification. The 62-residue stretch at 163-224 folds into the SH3 domain; sequence PFCGRARVHT…KFIYVDVISE (62 aa). One can recognise an SAM domain in the interval 241 to 305; that stretch reads KKSKTLQEFL…LSAAENFLEE (65 aa). The tract at residues 337 to 359 is disordered; it reads DSGCYISSGNSDNGKEDLESENL.

Interacts with FASLG. Interacts with phosphotyrosine containing proteins. Interacts (via SH3 domain) with CTTN. Interacts (phosphorylated at Ser-23) with YWHAB, YWHAE, YWHAG, YWHAH, YWHAZ and SFN. Interacts directly with SAP30 and HDAC1. Identified in a complex with SAP30 and HDAC1. Detected in peripheral blood B-cells (at protein level). Detected in spleen, liver and peripheral blood.

The protein resides in the nucleus. It is found in the cytoplasm. Its subcellular location is the cell projection. The protein localises to the ruffle. Functionally, negative regulator of B-cell activation. Down-regulates cell proliferation (in vitro). Promotes RAC1-dependent membrane ruffle formation and reorganization of the actin cytoskeleton. Regulates cell spreading and cell polarization. Stimulates HDAC1 activity. Regulates LYN activity by modulating its tyrosine phosphorylation. In Homo sapiens (Human), this protein is SAM domain-containing protein SAMSN-1 (SAMSN1).